The primary structure comprises 315 residues: Putative carboxypeptidase RC0549 (315 aa).

Ser125 serves as the catalytic Nucleophile. Catalysis depends on charge relay system residues Glu225 and His288.

This sequence belongs to the peptidase S66 family.

The chain is Putative carboxypeptidase RC0549 from Rickettsia conorii (strain ATCC VR-613 / Malish 7).